The sequence spans 129 residues: Transcriptional regulator WhiB2 (129 aa).

The interval 23-45 is disordered; that stretch reads SHAPHIDTGSTPTGAAGRPQLSL. The 58-residue stretch at 66 to 123 folds into the 4Fe-4S Wbl-type domain; the sequence is LCAQTDPEAFFPEKGGSTREAKRICQGCEVRDACLEYALAHDERFGIWGGLSERERRR. The [4Fe-4S] cluster site is built by C67, C90, C93, and C99.

This sequence belongs to the WhiB family. [4Fe-4S] cluster is required as a cofactor. The Fe-S cluster can be nitrosylated by nitric oxide (NO). In terms of processing, upon Fe-S cluster removal intramolecular disulfide bonds are formed.

It localises to the cytoplasm. Its function is as follows. Acts as a transcriptional regulator. Probably redox-responsive. The apo- but not holo-form probably binds DNA. This is Transcriptional regulator WhiB2 (whiB2) from Mycolicibacterium smegmatis (strain ATCC 700084 / mc(2)155) (Mycobacterium smegmatis).